We begin with the raw amino-acid sequence, 940 residues long: Pentatricopeptide repeat-containing protein At5g14770, mitochondrial (940 aa).

The transit peptide at 1–24 (MIMIRIWNNYKGKYRFFLSNCRSF) directs the protein to the mitochondrion. PPR repeat units lie at residues 59 to 93 (YVSLFHTLFRLYLSCERLYGAARTLSAMCTFGVVP), 94 to 129 (DSRLWNSLIHQFNVNGLVHDQVSLIYSKMIACGVSP), 130 to 161 (DVFALNVLIHSFCKVGRLSFAISLLRNRVISI), 162 to 196 (DTVTYNTVISGLCEHGLADEAYQFLSEMVKMGILP), 197 to 231 (DTVSYNTLIDGFCKVGNFVRAKALVDEISELNLIT), 241 to 259 (NLHAIEEAYRDMVMSGFDP), 260 to 294 (DVVTFSSIINRLCKGGKVLEGGLLLREMEEMSVYP), 295 to 329 (NHVTYTTLVDSLFKANIYRHALALYSQMVVRGIPV), 330 to 364 (DLVVYTVLMDGLFKAGDLREAEKTFKMLLEDNQVP), 365 to 399 (NVVTYTALVDGLCKAGDLSSAEFIITQMLEKSVIP), 400 to 434 (NVVTYSSMINGYVKKGMLEEAVSLLRKMEDQNVVP), 435 to 469 (NGFTYGTVIDGLFKAGKEEMAIELSKEMRLIGVEE), 470 to 504 (NNYILDALVNHLKRIGRIKEVKGLVKDMVSKGVTL), 505 to 539 (DQINYTSLIDVFFKGGDEEAALAWAEEMQERGMPW), 540 to 573 (DVVSYNVLISGMLKFGKVGADWAYKGMREKGIEP), 574 to 608 (DIATFNIMMNSQRKQGDSEGILKLWDKMKSCGIKP), 609 to 643 (SLMSCNIVVGMLCENGKMEEAIHILNQMMLMEIHP), 644 to 678 (NLTTYRIFLDTSSKHKRADAIFKTHETLLSYGIKL), 679 to 713 (SRQVYNTLIATLCKLGMTKKAAMVMGDMEARGFIP), 714 to 748 (DTVTFNSLMHGYFVGSHVRKALSTYSVMMEAGISP), 749 to 783 (NVATYNTIIRGLSDAGLIKEVDKWLSEMKSRGMRP), 784 to 818 (DDFTYNALISGQAKIGNMKGSMTIYCEMIADGLVP), 819 to 853 (KTSTYNVLISEFANVGKMLQARELLKEMGKRGVSP), and 854 to 891 (NTSTYCTMISGLCKLCTHPDVEWNKKAMYLAEAKGLLK).

It belongs to the PPR family. P subfamily.

The protein localises to the mitochondrion. The chain is Pentatricopeptide repeat-containing protein At5g14770, mitochondrial from Arabidopsis thaliana (Mouse-ear cress).